A 696-amino-acid polypeptide reads, in one-letter code: DNA-directed RNA polymerase subunit beta' (696 aa).

The Zn(2+) site is built by C69, C71, C87, and C90. Residues D504, D506, and D508 each coordinate Mg(2+).

The protein belongs to the RNA polymerase beta' chain family. RpoC1 subfamily. As to quaternary structure, in plastids the minimal PEP RNA polymerase catalytic core is composed of four subunits: alpha, beta, beta', and beta''. When a (nuclear-encoded) sigma factor is associated with the core the holoenzyme is formed, which can initiate transcription. It depends on Mg(2+) as a cofactor. Requires Zn(2+) as cofactor.

It localises to the plastid. Its subcellular location is the chloroplast. The catalysed reaction is RNA(n) + a ribonucleoside 5'-triphosphate = RNA(n+1) + diphosphate. In terms of biological role, DNA-dependent RNA polymerase catalyzes the transcription of DNA into RNA using the four ribonucleoside triphosphates as substrates. The polypeptide is DNA-directed RNA polymerase subunit beta' (Pinus koraiensis (Korean pine)).